Reading from the N-terminus, the 505-residue chain is N-succinylglutamate 5-semialdehyde dehydrogenase (505 aa).

G234–G239 contacts NAD(+). Residues E257 and C291 contribute to the active site.

This sequence belongs to the aldehyde dehydrogenase family. AstD subfamily.

The catalysed reaction is N-succinyl-L-glutamate 5-semialdehyde + NAD(+) + H2O = N-succinyl-L-glutamate + NADH + 2 H(+). Its pathway is amino-acid degradation; L-arginine degradation via AST pathway; L-glutamate and succinate from L-arginine: step 4/5. Its function is as follows. Catalyzes the NAD-dependent reduction of succinylglutamate semialdehyde into succinylglutamate. The chain is N-succinylglutamate 5-semialdehyde dehydrogenase from Yersinia pestis bv. Antiqua (strain Antiqua).